The primary structure comprises 355 residues: GTPase Obg (355 aa).

One can recognise an Obg domain in the interval 1-159 (MKLVDEAEIL…RLLKLELKLL (159 aa)). One can recognise an OBG-type G domain in the interval 160-342 (ADVGLLGFPN…IMKDVMAFFD (183 aa)). GTP-binding positions include 166-173 (GFPNAGKS), 191-195 (FTTLY), 213-216 (DVPG), 292-295 (NKAD), and 323-325 (SAL). Positions 173 and 193 each coordinate Mg(2+).

Belongs to the TRAFAC class OBG-HflX-like GTPase superfamily. OBG GTPase family. In terms of assembly, monomer. Requires Mg(2+) as cofactor.

It localises to the cytoplasm. An essential GTPase which binds GTP, GDP and possibly (p)ppGpp with moderate affinity, with high nucleotide exchange rates and a fairly low GTP hydrolysis rate. Plays a role in control of the cell cycle, stress response, ribosome biogenesis and in those bacteria that undergo differentiation, in morphogenesis control. The polypeptide is GTPase Obg (Xanthomonas euvesicatoria pv. vesicatoria (strain 85-10) (Xanthomonas campestris pv. vesicatoria)).